A 329-amino-acid chain; its full sequence is 4-hydroxythreonine-4-phosphate dehydrogenase (329 aa).

Substrate contacts are provided by histidine 136 and threonine 137. Histidine 166, histidine 211, and histidine 266 together coordinate a divalent metal cation. Positions 274, 283, and 292 each coordinate substrate.

Belongs to the PdxA family. Homodimer. It depends on Zn(2+) as a cofactor. Requires Mg(2+) as cofactor. Co(2+) is required as a cofactor.

It is found in the cytoplasm. It carries out the reaction 4-(phosphooxy)-L-threonine + NAD(+) = 3-amino-2-oxopropyl phosphate + CO2 + NADH. It participates in cofactor biosynthesis; pyridoxine 5'-phosphate biosynthesis; pyridoxine 5'-phosphate from D-erythrose 4-phosphate: step 4/5. Its function is as follows. Catalyzes the NAD(P)-dependent oxidation of 4-(phosphooxy)-L-threonine (HTP) into 2-amino-3-oxo-4-(phosphooxy)butyric acid which spontaneously decarboxylates to form 3-amino-2-oxopropyl phosphate (AHAP). This is 4-hydroxythreonine-4-phosphate dehydrogenase from Shigella dysenteriae serotype 1 (strain Sd197).